The following is a 481-amino-acid chain: O-phosphoseryl-tRNA(Sec) selenium transferase (481 aa).

The segment at 1–36 is tetramerization; it reads MKANFGKKEGEYSRLVSKSSNKLLNSLWEKKQIPEE. Arg69 provides a ligand contact to pyridoxal 5'-phosphate. The phosphate loop (P-loop) stretch occupies residues 90–100; that stretch reads GRSGNLLEIQP. Residues Arg91, Ser92, and Gln99 each coordinate substrate. Lys277 is modified (N6-(pyridoxal phosphate)lysine). Arg306 contacts substrate.

Belongs to the SepSecS family. Homotetramer formed by a catalytic dimer and a non-catalytic dimer serving as a binding platform that orients tRNASec for catalysis. Each tetramer binds the CCA ends of two tRNAs which point to the active sites of the catalytic dimer. The cofactor is pyridoxal 5'-phosphate.

It is found in the cytoplasm. The catalysed reaction is O-phospho-L-seryl-tRNA(Sec) + selenophosphate + H2O = L-selenocysteinyl-tRNA(Sec) + 2 phosphate. Its pathway is aminoacyl-tRNA biosynthesis; selenocysteinyl-tRNA(Sec) biosynthesis; selenocysteinyl-tRNA(Sec) from L-seryl-tRNA(Sec) (archaeal/eukaryal route): step 2/2. Functionally, converts O-phosphoseryl-tRNA(Sec) to selenocysteinyl-tRNA(Sec) required for selenoprotein biosynthesis. The sequence is that of O-phosphoseryl-tRNA(Sec) selenium transferase (secs-1) from Caenorhabditis elegans.